A 347-amino-acid chain; its full sequence is Quinolinate synthase (347 aa).

Iminosuccinate is bound by residues His-47 and Ser-68. Cys-113 lines the [4Fe-4S] cluster pocket. Residues 139-141 (YAN) and Ser-156 each bind iminosuccinate. Residue Cys-200 coordinates [4Fe-4S] cluster. Iminosuccinate contacts are provided by residues 226–228 (HPE) and Thr-243. Cys-297 is a [4Fe-4S] cluster binding site.

This sequence belongs to the quinolinate synthase family. Type 1 subfamily. [4Fe-4S] cluster serves as cofactor.

The protein resides in the cytoplasm. The enzyme catalyses iminosuccinate + dihydroxyacetone phosphate = quinolinate + phosphate + 2 H2O + H(+). The protein operates within cofactor biosynthesis; NAD(+) biosynthesis; quinolinate from iminoaspartate: step 1/1. In terms of biological role, catalyzes the condensation of iminoaspartate with dihydroxyacetone phosphate to form quinolinate. The sequence is that of Quinolinate synthase from Salmonella enteritidis PT4 (strain P125109).